A 110-amino-acid polypeptide reads, in one-letter code: Small ribosomal subunit protein bS16 (110 aa).

The disordered stretch occupies residues 84-110 (KRTARNNPEKAVPRKERKAQAEAAAKS). Basic and acidic residues predominate over residues 90–103 (NPEKAVPRKERKAQ).

Belongs to the bacterial ribosomal protein bS16 family.

The polypeptide is Small ribosomal subunit protein bS16 (Nitrobacter hamburgensis (strain DSM 10229 / NCIMB 13809 / X14)).